The following is a 143-amino-acid chain: Putative nickel-responsive regulator (143 aa).

The Ni(2+) site is built by H82, H97, H99, and C105.

Belongs to the transcriptional regulatory CopG/NikR family. The cofactor is Ni(2+).

Its function is as follows. Transcriptional regulator. This Helicobacter hepaticus (strain ATCC 51449 / 3B1) protein is Putative nickel-responsive regulator.